Here is a 518-residue protein sequence, read N- to C-terminus: Major facilitator superfamily domain-containing protein 8 (518 aa).

Positions 1–20 are disordered; sequence MAGLRNESEQEPLLGDTPGS. The Cytoplasmic segment spans residues 1-40; sequence MAGLRNESEQEPLLGDTPGSREWDILETEEHYKSRWRSIR. Residues 13–14 carry the Dileucine internalization motif motif; it reads LL. Residues 41 to 61 traverse the membrane as a helical segment; the sequence is ILYLTMFLSSVGFSVVMMSIW. Residues 62–74 are Extracellular-facing; that stretch reads PYLQKIDPTADTS. The chain crosses the membrane as a helical span at residues 75-95; sequence FLGWVIASYSLGQMVASPIFG. Topologically, residues 96 to 105 are cytoplasmic; it reads LWSNYRPRKE. A helical transmembrane segment spans residues 106 to 126; that stretch reads PLIVSILISVAANCLYAYLHI. At 127-131 the chain is on the extracellular side; the sequence is PASHN. The helical transmembrane segment at 132 to 152 threads the bilayer; that stretch reads KYYMLVARGLLGIGAGNVAVV. The Cytoplasmic portion of the chain corresponds to 153–173; the sequence is RSYTAGATSLQERTSSMANIS. Residues 174–194 traverse the membrane as a helical segment; that stretch reads MCQALGFILGPVFQTCFTFLG. The Extracellular portion of the chain corresponds to 195 to 211; sequence EKGVTWDVIKLQINMYT. A helical transmembrane segment spans residues 212–232; that stretch reads TPVLLSAFLGILNIILILAIL. At 233–266 the chain is on the cytoplasmic side; it reads REHRVDDSGRQCKSINFEEASTDEAQVPQGNIDQ. The chain crosses the membrane as a helical span at residues 267 to 287; the sequence is VAVVAINVLFFVTLFIFALFE. Residues 288 to 304 are Extracellular-facing; the sequence is TIITPLTMDMYAWTQEQ. A helical transmembrane segment spans residues 305–325; the sequence is AVLYNGIILAALGVEAVVIFL. At 326-337 the chain is on the cytoplasmic side; sequence GVKLLSKKIGER. A helical transmembrane segment spans residues 338 to 358; sequence AILLGGLIVVWVGFFILLPWG. Over 359 to 412 the chain is Extracellular; it reads NQFPKIQWEDLHNNSIPNTTFGEIIIGLWKSPMEDDNERPTGCSIEQAWCLYTP. Asn371 and Asn376 each carry an N-linked (GlcNAc...) asparagine glycan. The helical transmembrane segment at 413–433 threads the bilayer; it reads VIHLAQFLTSAVLIGLGYPVC. Residues 434–451 are Cytoplasmic-facing; that stretch reads NLMSYTLYSKILGPKPQG. Residues 452 to 472 form a helical membrane-spanning segment; it reads VYMGWLTASGSGARILGPMFI. The Extracellular portion of the chain corresponds to 473–482; it reads SQVYAHWGPR. The helical transmembrane segment at 483 to 503 threads the bilayer; sequence WAFSLVCGIIVLTITLLGVVY. Residues 504 to 518 lie on the Cytoplasmic side of the membrane; the sequence is KRLIALSVRYGRIQE.

Belongs to the major facilitator superfamily. Expressed at very low levels in all tissues tested.

The protein localises to the endosome membrane. The protein resides in the lysosome membrane. The enzyme catalyses chloride(in) = chloride(out). It carries out the reaction iodide(out) = iodide(in). It catalyses the reaction fluoride(in) = fluoride(out). Inhibited by chloride channel blockers 4,4'-diisothiocyano-2,2'-stilbenedisulfonate (DIDS), niflumic acid (NFA), and 5-Nitro-2-(3-phenylpropylamino) benzoic acid (NPPB). Its function is as follows. Outward-rectifying chloride channel involved in endolysosomal chloride homeostasis, membrane fusion and function. Conducts chloride currents up to hundreds of picoamperes. Regulates lysosomal calcium content by reducing the lysosomal membrane potential, thereby activating TRPML1 channel and further release of lysosomal calcium ions. Regulates the pH in endolysosomal compartments and may contribute to progressive acidification from endosome to lysosome. Permeable to other halides such as iodide and fluoride ions. The polypeptide is Major facilitator superfamily domain-containing protein 8 (Homo sapiens (Human)).